The primary structure comprises 328 residues: GMP reductase (328 aa).

C176 acts as the Thioimidate intermediate in catalysis. 205-228 (IIADGGIRTHGDIAKSIRFGASMI) provides a ligand contact to NADP(+).

It belongs to the IMPDH/GMPR family. GuaC type 2 subfamily.

The catalysed reaction is IMP + NH4(+) + NADP(+) = GMP + NADPH + 2 H(+). In terms of biological role, catalyzes the irreversible NADPH-dependent deamination of GMP to IMP. It functions in the conversion of nucleobase, nucleoside and nucleotide derivatives of G to A nucleotides, and in maintaining the intracellular balance of A and G nucleotides. The chain is GMP reductase from Streptococcus pneumoniae (strain Taiwan19F-14).